The following is a 173-amino-acid chain: Disulfide bond formation protein B (173 aa).

Over 1–11 (MNALQWSFRAQ) the chain is Cytoplasmic. Residues 12–28 (CLTGFLFCTGLLAYAIF) form a helical membrane-spanning segment. Residues 29–46 (LQLHQGLEPCPLCIFQRI) lie on the Periplasmic side of the membrane. A disulfide bond links C38 and C41. Residues 47-63 (AFAVLGILFLIAGLYNS) traverse the membrane as a helical segment. Over 64-70 (SNVYTRK) the chain is Cytoplasmic. A helical transmembrane segment spans residues 71 to 88 (AYGLLIFLTAIIGTGIAG). At 89-145 (RHVWVQLMPHNTISSCGSPLSFLSETMGPFEVFRTVLTGTSNCGNIDWRFLGLSMPM) the chain is on the periplasmic side. A disulfide bond links C104 and C131. The helical transmembrane segment at 146-164 (WSMFWFVALALLGLLVGFK) threads the bilayer. Residues 165 to 173 (AERRKPLFS) are Cytoplasmic-facing.

The protein belongs to the DsbB family.

The protein localises to the cell inner membrane. Required for disulfide bond formation in some periplasmic proteins. Acts by oxidizing the DsbA protein. The protein is Disulfide bond formation protein B of Xylella fastidiosa (strain Temecula1 / ATCC 700964).